Reading from the N-terminus, the 254-residue chain is tRNA uridine(34) hydroxylase (254 aa).

The Rhodanese domain occupies 123-217; sequence QDPNVILLDT…YLESIPESES (95 aa). Cysteine 177 (cysteine persulfide intermediate) is an active-site residue.

It belongs to the TrhO family.

The enzyme catalyses uridine(34) in tRNA + AH2 + O2 = 5-hydroxyuridine(34) in tRNA + A + H2O. Its function is as follows. Catalyzes oxygen-dependent 5-hydroxyuridine (ho5U) modification at position 34 in tRNAs. This Legionella pneumophila (strain Corby) protein is tRNA uridine(34) hydroxylase.